Consider the following 325-residue polypeptide: Ferrochelatase (325 aa).

His195 and Glu276 together coordinate Fe cation.

This sequence belongs to the ferrochelatase family.

The protein resides in the cytoplasm. The catalysed reaction is heme b + 2 H(+) = protoporphyrin IX + Fe(2+). It functions in the pathway porphyrin-containing compound metabolism; protoheme biosynthesis; protoheme from protoporphyrin-IX: step 1/1. In terms of biological role, catalyzes the ferrous insertion into protoporphyrin IX. The sequence is that of Ferrochelatase from Methylococcus capsulatus (strain ATCC 33009 / NCIMB 11132 / Bath).